The chain runs to 355 residues: Protein DVR-1 (355 aa).

The N-terminal stretch at 1–15 is a signal peptide; the sequence is MFLVLLRACLLTLSL. Residues 16-240 constitute a propeptide that is removed on maturation; it reads CSPAEDDGLV…PLQCRSRRKR (225 aa). N-linked (GlcNAc...) asparagine glycosylation is found at Asn108, Asn179, and Asn296. 3 disulfides stabilise this stretch: Cys254–Cys320, Cys283–Cys352, and Cys287–Cys354.

Belongs to the TGF-beta family. Homodimer. In terms of tissue distribution, abundant in ovaries and eggs, and equally distributed among all blastomeres.

The protein localises to the secreted. Serves to facilitate the differentiation of either mesoderm or endoderm either as a cofactor in an instructive signal or by providing permissive environment. This Danio rerio (Zebrafish) protein is Protein DVR-1 (dvr1).